The sequence spans 380 residues: Lipid-A-disaccharide synthase (380 aa).

It belongs to the LpxB family.

It carries out the reaction a lipid X + a UDP-2-N,3-O-bis[(3R)-3-hydroxyacyl]-alpha-D-glucosamine = a lipid A disaccharide + UDP + H(+). It participates in bacterial outer membrane biogenesis; LPS lipid A biosynthesis. Condensation of UDP-2,3-diacylglucosamine and 2,3-diacylglucosamine-1-phosphate to form lipid A disaccharide, a precursor of lipid A, a phosphorylated glycolipid that anchors the lipopolysaccharide to the outer membrane of the cell. This chain is Lipid-A-disaccharide synthase, found in Francisella tularensis subsp. tularensis (strain FSC 198).